The chain runs to 934 residues: 3-hydroxy-3-methylglutaryl-coenzyme A reductase (934 aa).

Residues 1–111 (MFYHGASANQ…VLNLVRGAET (111 aa)) are Lumenal-facing. Residues 112 to 132 (FDIALVTCAYIAMFYTLFNLF) traverse the membrane as a helical segment. Positions 113–280 (DIALVTCAYI…STFLSAILSL (168 aa)) constitute an SSD domain. Over 133–141 (ARMRAVGSK) the chain is Cytoplasmic. A helical membrane pass occupies residues 142-162 (VWLGLSTLVSSFFAFLFALYI). The Lumenal segment spans residues 163 to 168 (TTRVLD). A helical transmembrane segment spans residues 169–189 (LSIPFLSLSEGIPFFVAVVGF). The Cytoplasmic portion of the chain corresponds to 190 to 231 (NNKILLAEKVLQNQLNAQSSKNDAPTVLYQALREQGPLLLRD). Residues 232 to 252 (HLFMITAFLGCSFYASYLDGL) form a helical membrane-spanning segment. Topologically, residues 253 to 256 (KNFC) are lumenal. A helical membrane pass occupies residues 257-277 (ILAALILAFDILTTSTFLSAI). Topologically, residues 278–334 (LSLKLEINQIHRSTLLREQLEDDGLTETTVDDVLKSNSLAGTKTFTDAPSTLVTVAK) are cytoplasmic. Residues 335 to 355 (VAGVSVFFGLHFYGFGSAWLS) traverse the membrane as a helical segment. At 356-421 (DLSAGNETND…GLISTAARDK (66 aa)) the chain is on the lumenal side. N-linked (GlcNAc...) asparagine glycans are attached at residues Asn-361, Asn-364, and Asn-382. A helical transmembrane segment spans residues 422–442 (YISKFILFAFAVSASINVYLL). The Cytoplasmic portion of the chain corresponds to 443-934 (NVARIHTTRL…MQHNRAAAKK (492 aa)). Glu-618 serves as the catalytic Charge relay system. Position 624 to 630 (624 to 630 (SAMRGCK)) interacts with CoA. NADP(+)-binding positions include 685–687 (SRF) and 712–720 (DAMGMNMIS). Lys-752 (charge relay system) is an active-site residue. 781–783 (VLK) is a binding site for CoA. Asp-828 serves as the catalytic Charge relay system. 923–924 (SH) is a CoA binding site. The Proton donor role is filled by His-924. NADP(+) is bound at residue 928 to 929 (NR).

This sequence belongs to the HMG-CoA reductase family.

It localises to the endoplasmic reticulum membrane. The catalysed reaction is (R)-mevalonate + 2 NADP(+) + CoA = (3S)-3-hydroxy-3-methylglutaryl-CoA + 2 NADPH + 2 H(+). The protein operates within metabolic intermediate biosynthesis; (R)-mevalonate biosynthesis; (R)-mevalonate from acetyl-CoA: step 3/3. In terms of biological role, HMG-CoA reductase; part of the first module of ergosterol biosynthesis pathway that includes the early steps of the pathway, conserved across all eukaryotes, and which results in the formation of mevalonate from acetyl-coenzyme A (acetyl-CoA). In this module, the cytosolic acetyl-CoA acetyltransferase catalyzes the formation of acetoacetyl-CoA. The hydroxymethylglutaryl-CoA synthase then condenses acetyl-CoA with acetoacetyl-CoA to form HMG-CoA. The rate-limiting step of the early module is the reduction to mevalonate by the 3-hydroxy-3-methylglutaryl-coenzyme A (HMG-CoA) reductase. The chain is 3-hydroxy-3-methylglutaryl-coenzyme A reductase from Cyberlindnera jadinii (Torula yeast).